A 470-amino-acid chain; its full sequence is Shutoff alkaline exonuclease (470 aa).

This sequence belongs to the herpesviridae alkaline nuclease family. As to quaternary structure, forms a complex with the DNA polymerase, the DNA polymerase processivity factor, and the major DNA binding protein.

Its subcellular location is the host nucleus. It localises to the host cytoplasm. Its function is as follows. Plays a role in processing non linear or branched viral DNA intermediates in order to promote the production of mature packaged unit-length linear progeny viral DNA molecules. Exhibits endonuclease and exonuclease activities and accepts both double-stranded and single-stranded DNA as substrate. Exonuclease digestion of DNA is in the 5'-&gt; 3' direction and the products are 5'-monophosphate nucleosides. Additionally, forms a recombinase with the major DNA-binding protein, which displays strand exchange activity. Also acts as a cytoplasmic RNA endonuclease that induces degradation of the majority of the cellular messenger RNAs during early lytic infection. The resulting inhibition of cellular protein synthesis serves to ensure maximal viral gene expression and evasion from host immune response. Internally cleaves host mRNAs which are then degraded by the cellular exonuclease XRN1. Bypasses therefore the regulatory steps of deadenylation and decapping normally required for XRN1 activation. This Epstein-Barr virus (strain GD1) (HHV-4) protein is Shutoff alkaline exonuclease.